Reading from the N-terminus, the 275-residue chain is Expansin-A23 (275 aa).

The N-terminal stretch at 1–27 (MNLLGKMIYVEGFMMIMATLLVSMSYG) is a signal peptide. An Expansin-like EG45 domain is found at 72 to 182 (QGACGYGDLF…RRISCARTGG (111 aa)). The Expansin-like CBD domain occupies 192–271 (YFLMILPYNV…NWGFGQTFDG (80 aa)).

Belongs to the expansin family. Expansin A subfamily.

It localises to the secreted. It is found in the cell wall. The protein localises to the membrane. Functionally, causes loosening and extension of plant cell walls by disrupting non-covalent bonding between cellulose microfibrils and matrix glucans. No enzymatic activity has been found. The sequence is that of Expansin-A23 (EXPA23) from Arabidopsis thaliana (Mouse-ear cress).